The primary structure comprises 72 residues: Translation initiation factor IF-1 (72 aa).

The S1-like domain maps to 1 to 72; the sequence is MAKEDTLEFP…TKGRINYRFK (72 aa).

The protein belongs to the IF-1 family. In terms of assembly, component of the 30S ribosomal translation pre-initiation complex which assembles on the 30S ribosome in the order IF-2 and IF-3, IF-1 and N-formylmethionyl-tRNA(fMet); mRNA recruitment can occur at any time during PIC assembly.

It localises to the cytoplasm. Functionally, one of the essential components for the initiation of protein synthesis. Stabilizes the binding of IF-2 and IF-3 on the 30S subunit to which N-formylmethionyl-tRNA(fMet) subsequently binds. Helps modulate mRNA selection, yielding the 30S pre-initiation complex (PIC). Upon addition of the 50S ribosomal subunit IF-1, IF-2 and IF-3 are released leaving the mature 70S translation initiation complex. In Ruegeria sp. (strain TM1040) (Silicibacter sp.), this protein is Translation initiation factor IF-1.